The following is a 268-amino-acid chain: AN1-type zinc finger protein 1 (268 aa).

Position 2 is an N-acetylalanine (Ala2). AN1-type zinc fingers lie at residues 4–52 (LDIG…VVKE) and 58–106 (EHKS…VAKP). Residues Cys10, Cys15, Cys25, Cys28, Cys33, His36, His42, Cys44, Cys64, Cys69, Cys79, Cys82, Cys87, His90, His96, and Cys98 each contribute to the Zn(2+) site. The ubiquitin-like stretch occupies residues 160–260 (QTERTYFQVY…EYLNDEEQFL (101 aa)).

As to quaternary structure, associates with the 26S proteasome; this association occurs upon exposure to arsenite and is reduced in the presence of ATP. Interacts (via AN1-type 1 and 2 zinc fingers) with PSMD1; this interaction is increased upon arsenite treatment and occurs in an ATP-independent manner. Interacts with PSMC4. Interacts with PSMA1. Interacts (via its ubiquitin-like region) with VCP; this interaction occurs in an arsenite-dependent manner and is necessary for the recruitment of the ubiquitin-selective ATPase VCP to stress granules (SGs).

The protein localises to the cytoplasm. Its subcellular location is the stress granule. Plays a role in the regulation of cytoplasmic stress granules (SGs) turnover. SGs are dynamic and transient cytoplasmic ribonucleoprotein assemblies important for cellular protein homeostasis when protein production is suspended after acute exogenous stress. Associates with SGs and is involved in the efficient and specific arsenite-induced clearance process of SGs through the recruitment of the ubiquitin-selective ATPase VCP and the 26S proteasome. This process requires both complexes for efficient degradation of damaged ubiquitinated SG proteins during recovery from arsenite stress, and hence avoiding aberrant cytoplasmic SGs degradation via autophagy. The chain is AN1-type zinc finger protein 1 from Mus musculus (Mouse).